We begin with the raw amino-acid sequence, 299 residues long: Oxygen-dependent coproporphyrinogen-III oxidase (299 aa).

Residue Ser92 participates in substrate binding. A divalent metal cation-binding residues include His96 and His106. His106 (proton donor) is an active-site residue. 108 to 110 is a binding site for substrate; it reads NVR. His145 and His175 together coordinate a divalent metal cation. An important for dimerization region spans residues 240–275; the sequence is YVEFNLVWDRGTLFGLQTGGRTESILMSMPPLVRWE. 258–260 contributes to the substrate binding site; the sequence is GGR.

Belongs to the aerobic coproporphyrinogen-III oxidase family. Homodimer. A divalent metal cation is required as a cofactor.

It is found in the cytoplasm. It catalyses the reaction coproporphyrinogen III + O2 + 2 H(+) = protoporphyrinogen IX + 2 CO2 + 2 H2O. It functions in the pathway porphyrin-containing compound metabolism; protoporphyrin-IX biosynthesis; protoporphyrinogen-IX from coproporphyrinogen-III (O2 route): step 1/1. Functionally, involved in the heme biosynthesis. Catalyzes the aerobic oxidative decarboxylation of propionate groups of rings A and B of coproporphyrinogen-III to yield the vinyl groups in protoporphyrinogen-IX. This is Oxygen-dependent coproporphyrinogen-III oxidase from Salmonella paratyphi B (strain ATCC BAA-1250 / SPB7).